Reading from the N-terminus, the 627-residue chain is Pro-interleukin-16 (627 aa).

Disordered regions lie at residues 34 to 136, 162 to 267, and 316 to 337; these read HMPL…SIKQ, SSGE…LTRS, and GASP…ETSG. Ser-217 bears the Phosphoserine mark. The span at 318 to 337 shows a compositional bias: polar residues; sequence SPTSLSNEDSAANGCAETSG. Residues 401–497 form an interaction with PPP1R12A, PPP1R12B and PPP1R12C region; sequence KQLDSIHVTI…IVTRKLTPET (97 aa). PDZ domains are found at residues 407-492 and 529-614; these read HVTI…VTRK and TVTL…IKRK.

As to quaternary structure, homotetramer. Pro-interleukin-16 interacts (via PDZ 2 domain) with PPP1R12A, PPP1R12B and PPP1R12C. Pro-interleukin-16 interacts with GRIN2A. Pro-interleukin-16 interacts with GABPB1. Pro-interleukin-16 interacts (via PDZ 3 domain) with HDAC3.

Its subcellular location is the secreted. It is found in the cytoplasm. It localises to the nucleus. Interleukin-16 stimulates a migratory response in CD4+ lymphocytes, monocytes, and eosinophils. Primes CD4+ T-cells for IL-2 and IL-15 responsiveness. Also induces T-lymphocyte expression of interleukin 2 receptor. Ligand for CD4. Its function is as follows. Pro-interleukin-16 is involved in cell cycle progression in T-cells. Appears to be involved in transcriptional regulation of SKP2 and is probably part of a transcriptional repression complex on the core promoter of the SKP2 gene. May act as a scaffold for GABPB1 (the DNA-binding subunit the GABP transcription factor complex) and HDAC3 thus maintaining transcriptional repression and blocking cell cycle progression in resting T-cells. In Saimiri sciureus (Common squirrel monkey), this protein is Pro-interleukin-16 (IL16).